A 140-amino-acid chain; its full sequence is Nucleoside diphosphate kinase (140 aa).

The ATP site is built by K11, F59, R87, T93, R104, and N114. H117 serves as the catalytic Pros-phosphohistidine intermediate.

This sequence belongs to the NDK family. In terms of assembly, homotetramer. The cofactor is Mg(2+).

It localises to the cytoplasm. The catalysed reaction is a 2'-deoxyribonucleoside 5'-diphosphate + ATP = a 2'-deoxyribonucleoside 5'-triphosphate + ADP. The enzyme catalyses a ribonucleoside 5'-diphosphate + ATP = a ribonucleoside 5'-triphosphate + ADP. Its function is as follows. Major role in the synthesis of nucleoside triphosphates other than ATP. The ATP gamma phosphate is transferred to the NDP beta phosphate via a ping-pong mechanism, using a phosphorylated active-site intermediate. In Francisella tularensis subsp. holarctica (strain LVS), this protein is Nucleoside diphosphate kinase.